We begin with the raw amino-acid sequence, 133 residues long: NADPH-dependent 7-cyano-7-deazaguanine reductase (133 aa).

C48 acts as the Thioimide intermediate in catalysis. D55 functions as the Proton donor in the catalytic mechanism. Residues 70 to 72 and 89 to 90 contribute to the substrate site; these read VEL and QE.

The protein belongs to the GTP cyclohydrolase I family. QueF type 1 subfamily.

It localises to the cytoplasm. It carries out the reaction 7-aminomethyl-7-carbaguanine + 2 NADP(+) = 7-cyano-7-deazaguanine + 2 NADPH + 3 H(+). Its pathway is tRNA modification; tRNA-queuosine biosynthesis. Catalyzes the NADPH-dependent reduction of 7-cyano-7-deazaguanine (preQ0) to 7-aminomethyl-7-deazaguanine (preQ1). The protein is NADPH-dependent 7-cyano-7-deazaguanine reductase of Thermoanaerobacter pseudethanolicus (strain ATCC 33223 / 39E) (Clostridium thermohydrosulfuricum).